We begin with the raw amino-acid sequence, 279 residues long: uncharacterized protein (279 aa).

In terms of domain architecture, HTH rpiR-type spans methionine 1 to lysine 77. The H-T-H motif DNA-binding region spans isoleucine 37–lysine 56. The SIS domain occupies cysteine 123–serine 263.

This is an uncharacterized protein from Clostridium perfringens (strain 13 / Type A).